Here is a 138-residue protein sequence, read N- to C-terminus: Thyrotropin subunit beta (138 aa).

Residues 1–20 (MTALFLMSMLFGLTCGQAMS) form the signal peptide. 6 disulfide bridges follow: Cys22–Cys72, Cys36–Cys87, Cys39–Cys125, Cys47–Cys103, Cys51–Cys105, and Cys108–Cys115. Asn43 carries an N-linked (GlcNAc...) asparagine glycan. Residues 133 to 138 (LVGFSV) constitute a propeptide that is removed on maturation.

Belongs to the glycoprotein hormones subunit beta family. In terms of assembly, heterodimer of a common alpha chain and a unique beta chain which confers biological specificity to thyrotropin, lutropin, follitropin and gonadotropin.

It is found in the secreted. Indispensable for the control of thyroid structure and metabolism. In Homo sapiens (Human), this protein is Thyrotropin subunit beta (TSHB).